A 292-amino-acid polypeptide reads, in one-letter code: Phosphatidylglycerol--prolipoprotein diacylglyceryl transferase (292 aa).

4 consecutive transmembrane segments (helical) span residues Ile24–Ala44, Phe65–Tyr85, Gly110–Phe130, and Gln136–Gly156. Position 157 (Arg157) interacts with a 1,2-diacyl-sn-glycero-3-phospho-(1'-sn-glycerol). A run of 3 helical transmembrane segments spans residues Ser192–Leu212, Gly219–Phe239, and Gly256–Val276.

The protein belongs to the Lgt family.

Its subcellular location is the cell inner membrane. The enzyme catalyses L-cysteinyl-[prolipoprotein] + a 1,2-diacyl-sn-glycero-3-phospho-(1'-sn-glycerol) = an S-1,2-diacyl-sn-glyceryl-L-cysteinyl-[prolipoprotein] + sn-glycerol 1-phosphate + H(+). Its pathway is protein modification; lipoprotein biosynthesis (diacylglyceryl transfer). Functionally, catalyzes the transfer of the diacylglyceryl group from phosphatidylglycerol to the sulfhydryl group of the N-terminal cysteine of a prolipoprotein, the first step in the formation of mature lipoproteins. This chain is Phosphatidylglycerol--prolipoprotein diacylglyceryl transferase, found in Helicobacter hepaticus (strain ATCC 51449 / 3B1).